A 1120-amino-acid chain; its full sequence is Cluster 41 polyketide synthase (1120 aa).

The 424-residue stretch at 7-430 folds into the Ketosynthase family 3 (KS3) domain; the sequence is PHDVAVVGMG…GTVSHAIIEK (424 aa). Catalysis depends on for beta-ketoacyl synthase activity residues Cys178, His313, and His353. The interval 539–796 is malonyl-CoA:ACP transacylase (MAT) domain; the sequence is VWVFSGHGAQ…TSAISAAAED (258 aa). Ser625 functions as the For acyl/malonyl transferase activity in the catalytic mechanism. The segment at 804 to 943 is ketoreductase (KR) domain; the sequence is IKKILSMESR…IAMQWTSWRE (140 aa). A Carrier domain is found at 1042–1116; the sequence is DSLSRQVREC…HIVKWLMEKT (75 aa). O-(pantetheine 4'-phosphoryl)serine is present on Ser1076.

Its function is as follows. Polyketide synthase; part of the gene cluster 41 that mediates the biosynthesis of an extracellular and diffusible metabolite that is able to stimulate colony sclerotial production. The sequence is that of Cluster 41 polyketide synthase from Aspergillus flavus (strain ATCC 200026 / FGSC A1120 / IAM 13836 / NRRL 3357 / JCM 12722 / SRRC 167).